An 86-amino-acid chain; its full sequence is Small ribosomal subunit protein bS20 (86 aa).

This sequence belongs to the bacterial ribosomal protein bS20 family.

Binds directly to 16S ribosomal RNA. The sequence is that of Small ribosomal subunit protein bS20 from Kineococcus radiotolerans (strain ATCC BAA-149 / DSM 14245 / SRS30216).